Here is a 187-residue protein sequence, read N- to C-terminus: Probable carboxylesterase Culp7 (187 aa).

An intrachain disulfide couples C15 to C69. The active-site Nucleophile is S80. C151 and C158 are disulfide-bonded. The active site involves D155. H167 serves as the catalytic Proton donor/acceptor.

The protein belongs to the cutinase family.

The protein resides in the cytoplasm. It is found in the cell membrane. The protein localises to the secreted. It localises to the cell wall. Functionally, may have a role in cell wall processes. Does not exhibit cutinase activity. The protein is Probable carboxylesterase Culp7 of Mycobacterium tuberculosis (strain ATCC 25618 / H37Rv).